The sequence spans 149 residues: Transcriptional repressor NrdR (149 aa).

A zinc finger spans residues C3–C34. Residues P49–E139 form the ATP-cone domain.

The protein belongs to the NrdR family. It depends on Zn(2+) as a cofactor.

Its function is as follows. Negatively regulates transcription of bacterial ribonucleotide reductase nrd genes and operons by binding to NrdR-boxes. The sequence is that of Transcriptional repressor NrdR from Vibrio cholerae serotype O1 (strain ATCC 39541 / Classical Ogawa 395 / O395).